Consider the following 351-residue polypeptide: MSLLPYALARSFLFGMDAEAAHELTMDMLARGQRTPLQWAWCNETVSDPIELAGLRFPNRVGLAAGLDKNARCIDALAAMGFGFVEVGTVTPRAQPGNPKPRMFRLPEARALINRLGFNNEGLDAFVANVQRSQVRTQGRGQSKLLLGLNIGKNATTPIEDATRDYLTCLEGVYPHADYVTVNISSPNTQNLRALQSDAALDGLLGAIAEHREQLAAAQGRRVPIFVKIAPDLDEAQVAVIATTLQRHGMDGVVATNTTIRRDAVQGLRHAGETGGLSGAPVLEASNAVIRQLRAALGPTFPIIGVGGILSAEDAVSKIRAGADVVQIYTGLIYEGPALVGRAAKAIRDLR.

Residues 65–69 (AGLDK) and threonine 89 contribute to the FMN site. Substrate is bound at residue lysine 69. 114–118 (NRLGF) provides a ligand contact to substrate. The FMN site is built by asparagine 150 and asparagine 183. Asparagine 183 contacts substrate. The active-site Nucleophile is serine 186. Asparagine 188 contributes to the substrate binding site. FMN is bound by residues lysine 228 and threonine 256. Residue 257 to 258 (NT) coordinates substrate. FMN-binding positions include glycine 279, glycine 308, and 329–330 (YT).

This sequence belongs to the dihydroorotate dehydrogenase family. Type 2 subfamily. In terms of assembly, monomer. It depends on FMN as a cofactor.

Its subcellular location is the cell membrane. The catalysed reaction is (S)-dihydroorotate + a quinone = orotate + a quinol. Its pathway is pyrimidine metabolism; UMP biosynthesis via de novo pathway; orotate from (S)-dihydroorotate (quinone route): step 1/1. Catalyzes the conversion of dihydroorotate to orotate with quinone as electron acceptor. The protein is Dihydroorotate dehydrogenase (quinone) of Acidovorax sp. (strain JS42).